The sequence spans 546 residues: CTP synthase (546 aa).

Positions 1-265 (MTKYVFVTGG…DEIVCHKLNI (265 aa)) are amidoligase domain. Position 13 (Ser-13) interacts with CTP. Ser-13 contacts UTP. ATP-binding positions include 14–19 (SLGKGI) and Asp-71. Mg(2+)-binding residues include Asp-71 and Glu-139. CTP contacts are provided by residues 146–148 (DIE), 186–191 (KTKPTQ), and Lys-222. UTP is bound by residues 186–191 (KTKPTQ) and Lys-222. The Glutamine amidotransferase type-1 domain maps to 290 to 543 (NIAFVGKYVD…VRAALAHQQK (254 aa)). Gly-351 serves as a coordination point for L-glutamine. Residue Cys-378 is the Nucleophile; for glutamine hydrolysis of the active site. L-glutamine is bound by residues 379 to 382 (LGMQ), Glu-402, and Arg-469. Residues His-516 and Glu-518 contribute to the active site.

It belongs to the CTP synthase family. As to quaternary structure, homotetramer.

The enzyme catalyses UTP + L-glutamine + ATP + H2O = CTP + L-glutamate + ADP + phosphate + 2 H(+). It carries out the reaction L-glutamine + H2O = L-glutamate + NH4(+). It catalyses the reaction UTP + NH4(+) + ATP = CTP + ADP + phosphate + 2 H(+). Its pathway is pyrimidine metabolism; CTP biosynthesis via de novo pathway; CTP from UDP: step 2/2. With respect to regulation, allosterically activated by GTP, when glutamine is the substrate; GTP has no effect on the reaction when ammonia is the substrate. The allosteric effector GTP functions by stabilizing the protein conformation that binds the tetrahedral intermediate(s) formed during glutamine hydrolysis. Inhibited by the product CTP, via allosteric rather than competitive inhibition. Its function is as follows. Catalyzes the ATP-dependent amination of UTP to CTP with either L-glutamine or ammonia as the source of nitrogen. Regulates intracellular CTP levels through interactions with the four ribonucleotide triphosphates. The polypeptide is CTP synthase (Thiobacillus denitrificans (strain ATCC 25259 / T1)).